We begin with the raw amino-acid sequence, 209 residues long: Uracil phosphoribosyltransferase (209 aa).

Residues Arg-79, Arg-104, and 131-139 (DPMLATGGS) contribute to the 5-phospho-alpha-D-ribose 1-diphosphate site. Uracil contacts are provided by residues Ile-194 and 199–201 (GDA). Residue Asp-200 coordinates 5-phospho-alpha-D-ribose 1-diphosphate.

Belongs to the UPRTase family. Requires Mg(2+) as cofactor.

The catalysed reaction is UMP + diphosphate = 5-phospho-alpha-D-ribose 1-diphosphate + uracil. The protein operates within pyrimidine metabolism; UMP biosynthesis via salvage pathway; UMP from uracil: step 1/1. With respect to regulation, allosterically activated by GTP. Functionally, catalyzes the conversion of uracil and 5-phospho-alpha-D-ribose 1-diphosphate (PRPP) to UMP and diphosphate. This chain is Uracil phosphoribosyltransferase, found in Streptococcus uberis (strain ATCC BAA-854 / 0140J).